Here is a 210-residue protein sequence, read N- to C-terminus: UPF0637 protein RBAM_014510 (210 aa).

The protein belongs to the UPF0637 family.

The sequence is that of UPF0637 protein RBAM_014510 from Bacillus velezensis (strain DSM 23117 / BGSC 10A6 / LMG 26770 / FZB42) (Bacillus amyloliquefaciens subsp. plantarum).